The chain runs to 441 residues: Putative cytochrome P450 138 (441 aa).

Cys388 serves as a coordination point for heme.

It belongs to the cytochrome P450 family. The cofactor is heme.

This is Putative cytochrome P450 138 (cyp138) from Mycobacterium bovis (strain ATCC BAA-935 / AF2122/97).